The following is a 108-amino-acid chain: UPF0251 protein PF0620 (108 aa).

The protein belongs to the UPF0251 family.

In Pyrococcus furiosus (strain ATCC 43587 / DSM 3638 / JCM 8422 / Vc1), this protein is UPF0251 protein PF0620.